The chain runs to 191 residues: Protein Ves (191 aa).

Belongs to the Ves family.

The chain is Protein Ves from Escherichia coli (strain K12 / MC4100 / BW2952).